Consider the following 376-residue polypeptide: Deoxyguanosinetriphosphate triphosphohydrolase-like protein (376 aa).

Positions 1–32 (MEPSFAPYAAHSSQTRGRVHREAPAAPRSEFQ) are disordered. One can recognise an HD domain in the interval 65–196 (RLTHSIEVAQ…ANLADEIAYN (132 aa)).

This sequence belongs to the dGTPase family. Type 2 subfamily.

The sequence is that of Deoxyguanosinetriphosphate triphosphohydrolase-like protein from Thiobacillus denitrificans (strain ATCC 25259 / T1).